A 319-amino-acid chain; its full sequence is NADH-quinone oxidoreductase subunit H 2 (319 aa).

Transmembrane regions (helical) follow at residues methionine 1–leucine 21, isoleucine 77–glycine 97, valine 107–alanine 127, leucine 147–phenylalanine 167, valine 179–alanine 199, leucine 214–glutamate 234, valine 238–leucine 258, valine 262–leucine 282, and phenylalanine 293–valine 313.

This sequence belongs to the complex I subunit 1 family. NDH-1 is composed of 14 different subunits. Subunits NuoA, H, J, K, L, M, N constitute the membrane sector of the complex.

It is found in the cell inner membrane. It carries out the reaction a quinone + NADH + 5 H(+)(in) = a quinol + NAD(+) + 4 H(+)(out). Its function is as follows. NDH-1 shuttles electrons from NADH, via FMN and iron-sulfur (Fe-S) centers, to quinones in the respiratory chain. The immediate electron acceptor for the enzyme in this species is believed to be ubiquinone. Couples the redox reaction to proton translocation (for every two electrons transferred, four hydrogen ions are translocated across the cytoplasmic membrane), and thus conserves the redox energy in a proton gradient. This subunit may bind ubiquinone. In Rhodopseudomonas palustris (strain ATCC BAA-98 / CGA009), this protein is NADH-quinone oxidoreductase subunit H 2.